A 109-amino-acid polypeptide reads, in one-letter code: Spermidine export protein MdtI (109 aa).

Over 1 to 5 (MAQFE) the chain is Periplasmic. Residues 6 to 26 (WVHAAWLALAIVLEIVANVFL) form a helical membrane-spanning segment. The Cytoplasmic portion of the chain corresponds to 27–35 (KFSDGFRRK). A helical membrane pass occupies residues 36-56 (IFGLLSLAAVLAAFSALSQAV). Residues 57 to 63 (KGIDLSV) lie on the Periplasmic side of the membrane. Residues 64-84 (VYALWGGFGIAATLAAGWILF) form a helical membrane-spanning segment. The Cytoplasmic portion of the chain corresponds to 85–87 (GQR). Residues 88–108 (LNRKGWIGLVLLLAGMIMVKL) traverse the membrane as a helical segment. Ala-109 is a topological domain (periplasmic).

This sequence belongs to the drug/metabolite transporter (DMT) superfamily. Small multidrug resistance (SMR) (TC 2.A.7.1) family. MdtI subfamily. In terms of assembly, forms a complex with MdtJ.

The protein resides in the cell inner membrane. Its function is as follows. Catalyzes the excretion of spermidine. In Shigella flexneri, this protein is Spermidine export protein MdtI (mdtI).